Consider the following 193-residue polypeptide: Immunogenic protein MPB70 (193 aa).

A signal peptide spans 1 to 30 (MKVKNTIAATSFAAAGLAALAVAVSPPAAA). Residues 57-189 (QDPVAVAASN…ATVYMIDSVL (133 aa)) form the FAS1 domain.

As to quaternary structure, generally found as a monomer; homodimer in culture fluids.

The protein localises to the secreted. The polypeptide is Immunogenic protein MPB70 (mpb70) (Mycobacterium bovis (strain ATCC BAA-935 / AF2122/97)).